The primary structure comprises 279 residues: Uroplakin-3b (279 aa).

Positions 1–26 are cleaved as a signal peptide; it reads MGLPSRQPRLWLLLLVVLGWPQPCLT. Residues 27 to 200 lie on the Lumenal side of the membrane; that stretch reads LDLIPYTPRI…DTWPGRRSGD (174 aa). An N-linked (GlcNAc...) asparagine glycan is attached at asparagine 77. A helical transmembrane segment spans residues 201–221; the sequence is MIIITSILSSLAGLLLLAFLA. The Cytoplasmic segment spans residues 222–279; that stretch reads ASSVRFSSLWWPEEAPEQLRIGSFMGKRYMTHHIPPSEAATLPVGCEPGLERFPSLSP.

It belongs to the uroplakin-3 family. Heterodimer with uroplakin-1B (UPK1B). Expression is urothelium-specific.

It is found in the cell membrane. Functionally, component of the asymmetric unit membrane (AUM); a highly specialized biomembrane elaborated by terminally differentiated urothelial cells. May play an important role in AUM-cytoskeleton interaction in terminally differentiated urothelial cells. It also contributes to the formation of urothelial glycocalyx which may play an important role in preventing bacterial adherence. This chain is Uroplakin-3b (UPK3B), found in Bos taurus (Bovine).